Here is an 87-residue protein sequence, read N- to C-terminus: Omega-lycotoxin-Am1g (87 aa).

The N-terminal stretch at 1–17 (MKLSIFFVLFFIAIAYC) is a signal peptide. The propeptide occupies 18–40 (QPEFLDDEEDEVEETLPVAEEGR). Intrachain disulfides connect C44-C59, C51-C64, C58-C84, and C66-C82.

Belongs to the neurotoxin omega-lctx family. Expressed by the venom gland.

The protein localises to the secreted. Its function is as follows. Modulates Cav2.1/CACNA1A voltage-gated calcium channels (P/Q-type currents) in rat cerebellar Purkinje cells and hippocampal CA1-CA3 neurons. At saturating concentrations (&gt;10 nM) decelerates activation kinetics and slightly increases peak amplitude without affecting deactivation kinetics. In vivo, does not cause death when intravenously injected into mice. In rat models, through its activity on Cav2.1/CACNA1A, has an ameliorative effect on memory defects provoked by hyperstimulation of N-methyl-D-aspartate receptors (NMDARs) in the hippocampus. The chain is Omega-lycotoxin-Am1g from Alopecosa marikovskyi (Wolf spider).